The following is a 708-amino-acid chain: Soluble guanylate cyclase gcy-37 (708 aa).

Heme is bound at residue histidine 105. A coiled-coil region spans residues 368-409 (LNQSRICQMELNKKLEETMKKMKKMTEELEVKKSQTDRLLFE). The Guanylate cyclase domain maps to 434 to 562 (SVIFTDIPDF…NTVNVTKSIC (129 aa)). The Mg(2+) site is built by aspartate 439 and aspartate 483.

Belongs to the adenylyl cyclase class-4/guanylyl cyclase family. In terms of assembly, heterodimer; with other soluble guanylate cyclases. The cofactor is heme. As to expression, expressed in a small number of neurons, corresponding to URX, AQR and PQR neurons.

The protein localises to the cytoplasm. The catalysed reaction is GTP = 3',5'-cyclic GMP + diphosphate. Its activity is regulated as follows. May be regulated by molecular oxygen. Probably not activated by nitric oxide (NO). Its function is as follows. Synthesizes cyclic GMP (cGMP) from GTP. May play a role in sensory neurons. This Caenorhabditis elegans protein is Soluble guanylate cyclase gcy-37 (gcy-37).